We begin with the raw amino-acid sequence, 209 residues long: Small ribosomal subunit protein uS4 (209 aa).

One can recognise an S4 RNA-binding domain in the interval arginine 99–glutamine 160.

Belongs to the universal ribosomal protein uS4 family. Part of the 30S ribosomal subunit. Contacts protein S5. The interaction surface between S4 and S5 is involved in control of translational fidelity.

Functionally, one of the primary rRNA binding proteins, it binds directly to 16S rRNA where it nucleates assembly of the body of the 30S subunit. With S5 and S12 plays an important role in translational accuracy. The chain is Small ribosomal subunit protein uS4 from Koribacter versatilis (strain Ellin345).